A 191-amino-acid polypeptide reads, in one-letter code: Large ribosomal subunit protein uL5 (191 aa).

It belongs to the universal ribosomal protein uL5 family. In terms of assembly, part of the 50S ribosomal subunit; part of the 5S rRNA/L5/L18/L25 subcomplex. Contacts the 5S rRNA and the P site tRNA. Forms a bridge to the 30S subunit in the 70S ribosome.

Functionally, this is one of the proteins that bind and probably mediate the attachment of the 5S RNA into the large ribosomal subunit, where it forms part of the central protuberance. In the 70S ribosome it contacts protein S13 of the 30S subunit (bridge B1b), connecting the 2 subunits; this bridge is implicated in subunit movement. Contacts the P site tRNA; the 5S rRNA and some of its associated proteins might help stabilize positioning of ribosome-bound tRNAs. This chain is Large ribosomal subunit protein uL5, found in Micrococcus luteus (Micrococcus lysodeikticus).